Here is a 285-residue protein sequence, read N- to C-terminus: Bifunctional protein FolD (285 aa).

Residues Gly165–Gly167, Thr192, and Val233 contribute to the NADP(+) site.

Belongs to the tetrahydrofolate dehydrogenase/cyclohydrolase family. In terms of assembly, homodimer.

The enzyme catalyses (6R)-5,10-methylene-5,6,7,8-tetrahydrofolate + NADP(+) = (6R)-5,10-methenyltetrahydrofolate + NADPH. The catalysed reaction is (6R)-5,10-methenyltetrahydrofolate + H2O = (6R)-10-formyltetrahydrofolate + H(+). The protein operates within one-carbon metabolism; tetrahydrofolate interconversion. Its function is as follows. Catalyzes the oxidation of 5,10-methylenetetrahydrofolate to 5,10-methenyltetrahydrofolate and then the hydrolysis of 5,10-methenyltetrahydrofolate to 10-formyltetrahydrofolate. This chain is Bifunctional protein FolD, found in Corynebacterium jeikeium (strain K411).